Here is a 287-residue protein sequence, read N- to C-terminus: ATP synthase gamma chain (287 aa).

The protein belongs to the ATPase gamma chain family. F-type ATPases have 2 components, CF(1) - the catalytic core - and CF(0) - the membrane proton channel. CF(1) has five subunits: alpha(3), beta(3), gamma(1), delta(1), epsilon(1). CF(0) has three main subunits: a, b and c.

The protein resides in the cell inner membrane. Produces ATP from ADP in the presence of a proton gradient across the membrane. The gamma chain is believed to be important in regulating ATPase activity and the flow of protons through the CF(0) complex. The chain is ATP synthase gamma chain from Marinobacter nauticus (strain ATCC 700491 / DSM 11845 / VT8) (Marinobacter aquaeolei).